Consider the following 137-residue polypeptide: Glutamate mutase sigma subunit (137 aa).

In terms of domain architecture, B12-binding spans 3-137; that stretch reads KKTIVLGVIG…ADMKEVLGVE (135 aa). Adenosylcob(III)alamin is bound by residues 13 to 17, His16, 61 to 63, and 93 to 97; these read SDCHA, SSL, and NIVVG.

The protein belongs to the methylaspartate mutase GlmS subunit family. In terms of assembly, heterotetramer composed of 2 epsilon subunits (GlmE) and 2 sigma subunits (GlmS). GlmE exists as a homodimer and GlmS as a monomer. It depends on adenosylcob(III)alamin as a cofactor.

It carries out the reaction (2S,3S)-3-methyl-L-aspartate = L-glutamate. It functions in the pathway amino-acid degradation; L-glutamate degradation via mesaconate pathway; acetate and pyruvate from L-glutamate: step 1/4. Its function is as follows. Catalyzes the carbon skeleton rearrangement of L-glutamate to L-threo-3-methylaspartate ((2S,3S)-3-methylaspartate). The protein is Glutamate mutase sigma subunit of Clostridium tetanomorphum.